Reading from the N-terminus, the 254-residue chain is Type III pantothenate kinase (254 aa).

7–14 is a binding site for ATP; that stretch reads DIGNTRLK. Residues tyrosine 97 and 104–107 each bind substrate; that span reads GSDR. The active-site Proton acceptor is aspartate 106. Threonine 134 is a binding site for ATP. A substrate-binding site is contributed by threonine 184.

Belongs to the type III pantothenate kinase family. In terms of assembly, homodimer. Requires NH4(+) as cofactor. The cofactor is K(+).

The protein resides in the cytoplasm. The catalysed reaction is (R)-pantothenate + ATP = (R)-4'-phosphopantothenate + ADP + H(+). The protein operates within cofactor biosynthesis; coenzyme A biosynthesis; CoA from (R)-pantothenate: step 1/5. Its function is as follows. Catalyzes the phosphorylation of pantothenate (Pan), the first step in CoA biosynthesis. The polypeptide is Type III pantothenate kinase (Methylibium petroleiphilum (strain ATCC BAA-1232 / LMG 22953 / PM1)).